The following is a 194-amino-acid chain: PSVNARPCSSPLVCPAKGEKFFGVGSTSRIRRLPPHLAWCSIDWEQLCLLNLLGSGGFGSVYKATYHGATVAVKQVNRCSKNHLASRQSFWAELNVVRLDHNNVVRIVAASTCTPASQDSLGTIIMEYAGNCTLHHVIYGTGYLTGNSNDDLKCDHGFLSTAQAIIYSCDIVAGLMFLHSQLIVHLDLKPANIF.

Residues Leu47–Phe194 form the Protein kinase domain. ATP-binding positions include Leu53–Val61 and Lys74. The active-site Proton acceptor is Asp187.

Belongs to the protein kinase superfamily. Ser/Thr protein kinase family.

It catalyses the reaction L-seryl-[protein] + ATP = O-phospho-L-seryl-[protein] + ADP + H(+). It carries out the reaction L-threonyl-[protein] + ATP = O-phospho-L-threonyl-[protein] + ADP + H(+). This chain is Serine/threonine-protein kinase mos (MOS), found in Dendroaspis angusticeps (Eastern green mamba).